Here is a 300-residue protein sequence, read N- to C-terminus: 4-hydroxy-tetrahydrodipicolinate synthase (300 aa).

Threonine 57 lines the pyruvate pocket. The active-site Proton donor/acceptor is tyrosine 145. The active-site Schiff-base intermediate with substrate is the lysine 173. Pyruvate is bound at residue isoleucine 213.

Belongs to the DapA family. In terms of assembly, homotetramer; dimer of dimers.

The protein localises to the cytoplasm. It carries out the reaction L-aspartate 4-semialdehyde + pyruvate = (2S,4S)-4-hydroxy-2,3,4,5-tetrahydrodipicolinate + H2O + H(+). It functions in the pathway amino-acid biosynthesis; L-lysine biosynthesis via DAP pathway; (S)-tetrahydrodipicolinate from L-aspartate: step 3/4. Its function is as follows. Catalyzes the condensation of (S)-aspartate-beta-semialdehyde [(S)-ASA] and pyruvate to 4-hydroxy-tetrahydrodipicolinate (HTPA). This is 4-hydroxy-tetrahydrodipicolinate synthase from Corynebacterium urealyticum (strain ATCC 43042 / DSM 7109).